We begin with the raw amino-acid sequence, 137 residues long: MFVPKKSKYKKVFKGRIKGNAKGGSTLSFGDYGLKAMEVGKVQSKHIETARRVISRTLKRSGKVWIRIFPDTPVSKKPADVRMGKGKGSIEFWVFKAKPGRVLFEISSDVPMHLARLALEKATAKLPMKCKFISNHN.

It belongs to the universal ribosomal protein uL16 family. As to quaternary structure, part of the 50S ribosomal subunit.

Its function is as follows. Binds 23S rRNA and is also seen to make contacts with the A and possibly P site tRNAs. The chain is Large ribosomal subunit protein uL16 from Wolbachia pipientis subsp. Culex pipiens (strain wPip).